Reading from the N-terminus, the 284-residue chain is Probable palmitoyltransferase ZDHHC24 (284 aa).

The Cytoplasmic portion of the chain corresponds to 1–18; the sequence is MGEPWAARGTEGAPARMP. Residues 19–39 traverse the membrane as a helical segment; sequence VVFTALWAAVVVLELTYVMVL. The Extracellular segment spans residues 40-52; it reads GPGPPPLEPLARA. Residues 53-73 traverse the membrane as a helical segment; that stretch reads LQLALAAYQLLNLLGNMGLFL. The Cytoplasmic segment spans residues 74–137; that stretch reads RSDPSIRGVM…GRCVGFHNYR (64 aa). Positions 94 to 144 constitute a DHHC domain; sequence AYCYQCQSQVPPRSGHCSACRVCILRRDHHCRLLGRCVGFHNYRPFLCLLL. Residue Cys-124 is the S-palmitoyl cysteine intermediate of the active site. Residues 138–158 traverse the membrane as a helical segment; sequence PFLCLLLHAAGVLLHISVLLS. The Extracellular segment spans residues 159 to 166; that stretch reads PALSALLQ. The helical transmembrane segment at 167-187 threads the bilayer; that stretch reads AHSALYTVALLLLPWLMLLTG. The Cytoplasmic portion of the chain corresponds to 188–195; the sequence is KVSLAQFA. The helical transmembrane segment at 196-216 threads the bilayer; that stretch reads LAFVVDTCVAGALLCGAGLLF. Over 217 to 284 the chain is Extracellular; the sequence is HGMLLLRGQT…TPTDVGLVTS (68 aa).

This sequence belongs to the DHHC palmitoyltransferase family.

It localises to the membrane. The catalysed reaction is L-cysteinyl-[protein] + hexadecanoyl-CoA = S-hexadecanoyl-L-cysteinyl-[protein] + CoA. In terms of biological role, probable palmitoyltransferase that could catalyze the addition of palmitate onto various protein substrates. This chain is Probable palmitoyltransferase ZDHHC24 (Zdhhc24), found in Rattus norvegicus (Rat).